A 397-amino-acid polypeptide reads, in one-letter code: Oxygen-dependent coproporphyrinogen-III oxidase, chloroplastic (397 aa).

The segment at Glu76 to Glu95 is disordered. A compositionally biased stretch (polar residues) spans Met79–Val90. Residues Val135–Lys144 are important for dimerization. A substrate-binding site is contributed by Ser185. The active-site Proton donor is the His199. Substrate-binding positions include Asn201–Arg203 and Gly355–Ser360. An important for dimerization region spans residues Tyr337–Glu372.

It belongs to the aerobic coproporphyrinogen-III oxidase family. In terms of assembly, homodimer.

It localises to the plastid. The protein localises to the chloroplast. It carries out the reaction coproporphyrinogen III + O2 + 2 H(+) = protoporphyrinogen IX + 2 CO2 + 2 H2O. It functions in the pathway porphyrin-containing compound metabolism; protoporphyrin-IX biosynthesis; protoporphyrinogen-IX from coproporphyrinogen-III (O2 route): step 1/1. In terms of biological role, involved in the heme and chlorophyll biosynthesis. Catalyzes the aerobic oxidative decarboxylation of propionate groups of rings A and B of coproporphyrinogen-III to yield the vinyl groups in protoporphyrinogen-IX. The sequence is that of Oxygen-dependent coproporphyrinogen-III oxidase, chloroplastic (CPX) from Nicotiana tabacum (Common tobacco).